A 424-amino-acid polypeptide reads, in one-letter code: Anaerobic glycerol-3-phosphate dehydrogenase subunit B (424 aa).

The protein belongs to the anaerobic G-3-P dehydrogenase subunit B family. Composed of a catalytic GlpA/B dimer and of membrane bound GlpC. FMN is required as a cofactor.

It carries out the reaction a quinone + sn-glycerol 3-phosphate = dihydroxyacetone phosphate + a quinol. Its pathway is polyol metabolism; glycerol degradation via glycerol kinase pathway; glycerone phosphate from sn-glycerol 3-phosphate (anaerobic route): step 1/1. Its function is as follows. Conversion of glycerol 3-phosphate to dihydroxyacetone. Uses fumarate or nitrate as electron acceptor. This is Anaerobic glycerol-3-phosphate dehydrogenase subunit B from Yersinia enterocolitica serotype O:8 / biotype 1B (strain NCTC 13174 / 8081).